We begin with the raw amino-acid sequence, 176 residues long: Late lactation protein A (176 aa).

Residues 1–18 (MRVLFLTISLSLFSIIHA) form the signal peptide. C78 and C171 are disulfide-bonded.

The protein belongs to the calycin superfamily. Lipocalin family. As to expression, mammary gland specific. Secreted in milk.

Its subcellular location is the secreted. Functionally, probably serves a role in the transport of a small ligand released during the hydrolysis of milk fat. In Notamacropus eugenii (Tammar wallaby), this protein is Late lactation protein A (LLPA).